A 332-amino-acid chain; its full sequence is UPF0285 protein MK0078 (332 aa).

Belongs to the UPF0285 family.

This chain is UPF0285 protein MK0078, found in Methanopyrus kandleri (strain AV19 / DSM 6324 / JCM 9639 / NBRC 100938).